The chain runs to 80 residues: Small ribosomal subunit protein uS17 (80 aa).

This sequence belongs to the universal ribosomal protein uS17 family. As to quaternary structure, part of the 30S ribosomal subunit.

Functionally, one of the primary rRNA binding proteins, it binds specifically to the 5'-end of 16S ribosomal RNA. In Brucella suis (strain ATCC 23445 / NCTC 10510), this protein is Small ribosomal subunit protein uS17.